Here is a 275-residue protein sequence, read N- to C-terminus: 4-hydroxy-tetrahydrodipicolinate reductase (275 aa).

Residues 13–18 (GAAGKM) and 108–110 (GTT) each bind NAD(+). Histidine 164 serves as the catalytic Proton donor/acceptor. Position 165 (histidine 165) interacts with (S)-2,3,4,5-tetrahydrodipicolinate. The Proton donor role is filled by lysine 168. Residue 174–175 (GT) participates in (S)-2,3,4,5-tetrahydrodipicolinate binding.

The protein belongs to the DapB family.

The protein resides in the cytoplasm. It catalyses the reaction (S)-2,3,4,5-tetrahydrodipicolinate + NAD(+) + H2O = (2S,4S)-4-hydroxy-2,3,4,5-tetrahydrodipicolinate + NADH + H(+). The catalysed reaction is (S)-2,3,4,5-tetrahydrodipicolinate + NADP(+) + H2O = (2S,4S)-4-hydroxy-2,3,4,5-tetrahydrodipicolinate + NADPH + H(+). Its pathway is amino-acid biosynthesis; L-lysine biosynthesis via DAP pathway; (S)-tetrahydrodipicolinate from L-aspartate: step 4/4. Its function is as follows. Catalyzes the conversion of 4-hydroxy-tetrahydrodipicolinate (HTPA) to tetrahydrodipicolinate. This chain is 4-hydroxy-tetrahydrodipicolinate reductase, found in Cyanothece sp. (strain PCC 7425 / ATCC 29141).